Here is a 1997-residue protein sequence, read N- to C-terminus: Nucleoprotein TPR (1997 aa).

Coiled-coil stretches lie at residues 1–36 (QEQH…NDLL), 101–277 (EIVK…HQMT), 335–1103 (DSTE…IKTI), and 1129–1305 (AEAS…EPQE). Composition is skewed to basic and acidic residues over residues 672 to 702 (SSEY…KTVE) and 1290 to 1305 (REQQ…EPQE). 6 disordered regions span residues 672-706 (SSEY…QMEQ), 1290-1352 (REQQ…AAVP), 1438-1529 (AFVQ…KTET), 1561-1752 (IQTS…RRQS), 1795-1832 (AIHS…ASQG), and 1870-1997 (ENPA…RSNI). 3 stretches are compositionally biased toward polar residues: residues 1306 to 1321 (TTRI…QPTT), 1328 to 1347 (SANT…SKVT), and 1446 to 1487 (SHAT…SSSI). The span at 1511 to 1529 (DQQRTKKRKEEDIEEKTET) shows a compositional bias: basic and acidic residues. Residues 1561–1587 (IQTSQVIESQAPEQLQNVQSTQDSLQD) are compositionally biased toward polar residues. 2 stretches are compositionally biased toward acidic residues: residues 1601–1637 (SDEE…DSNE) and 1644–1667 (GNED…ETED). Polar residues-rich tracts occupy residues 1692–1709 (AEST…SASD), 1817–1830 (QASS…QLAS), and 1879–1899 (HASQ…TSVD). A compositionally biased stretch (acidic residues) spans 1902–1915 (AADEGDEVFVEAES). The span at 1950-1959 (SSSIADTSSS) shows a compositional bias: low complexity.

The protein belongs to the TPR family. Homodimer. Part of the nuclear pore complex (NPC). Interacts with nuclear receptor KPNB1; the interaction occurs in a RanGTP-dependent manner. Associates with the Importin alpha/Importin beta receptor. As to expression, expressed in epithelial cells, oocytes and egg (at protein level).

It is found in the nucleus. The protein localises to the nucleus membrane. The protein resides in the nucleus envelope. It localises to the nuclear pore complex. Its subcellular location is the cytoplasm. It is found in the cytoskeleton. The protein localises to the spindle. The protein resides in the chromosome. It localises to the centromere. Its subcellular location is the kinetochore. Component of the nuclear pore complex (NPC), a complex required for the trafficking across the nuclear envelope. Functions as a scaffolding element in the nuclear phase of the NPC essential for normal nucleocytoplasmic transport of proteins and mRNAs, plays a role in the establishment of nuclear-peripheral chromatin compartmentalization in interphase, and in the mitotic spindle checkpoint signaling during mitosis. Involved in the quality control and retention of unspliced mRNAs in the nucleus. Implicated in nuclear export of mRNAs transcribed from heat shock gene promoters. May play a limited role in the regulation of nuclear protein export. May be involved in the formation and/or maintenance of NPC-associated perinuclear heterochromatin exclusion zones (HEZs). Finally, may act as a spatial regulator of the spindle-assembly checkpoint (SAC) response. This chain is Nucleoprotein TPR, found in Xenopus laevis (African clawed frog).